Here is a 173-residue protein sequence, read N- to C-terminus: C-type lectin mosGCTL-7 (173 aa).

A signal peptide spans 1 to 24 (MVVGWSLLGWALSWLAVATVVVSA). The 117-residue stretch at 51–167 (NWFKATEYCH…CWDEYYFVCE (117 aa)) folds into the C-type lectin domain. 2 disulfide bridges follow: Cys-59/Cys-166 and Cys-139/Cys-158. Asn-119 and Asn-144 each carry an N-linked (GlcNAc...) asparagine glycan.

In terms of assembly, interacts with putative receptor-type tyrosine-protein phosphatase mosPTP-1; the interaction may mediate the recruitment of Japanese encephalitis virus particles in complex with C-type lectin mosGCTL-7 to the cell surface.

It localises to the secreted. In terms of biological role, carbohydrate-binding protein. Functionally, (Microbial infection) Facilitates Japanese encephalitis virus infection in mosquitoes. This Culex quinquefasciatus (Southern house mosquito) protein is C-type lectin mosGCTL-7.